The following is a 388-amino-acid chain: Alpha-2B adrenergic receptor (388 aa).

The helical transmembrane segment at 1-25 (AIAAVITFLILFTIFGNALVILAVL) threads the bilayer. Over 26–36 (TSRSLRAPQNL) the chain is Cytoplasmic. A helical transmembrane segment spans residues 37-62 (FLVSLAAADILVATLIIPFSLANELL). Residues 63-72 (GYWYFRRTWC) lie on the Extracellular side of the membrane. Cysteine 72 and cysteine 151 are joined by a disulfide. The chain crosses the membrane as a helical span at residues 73 to 95 (EVYLALDVLFCTSSIVHLCAISL). Residues 96 to 117 (DRYWAVSRALEYNSKRTPRXIK) are Cytoplasmic-facing. The helical transmembrane segment at 118 to 140 (CIILTVWLIAAAISLPPLIYKGD) threads the bilayer. The Extracellular segment spans residues 141 to 156 (QGPQPRGRPQCKLNQE). Residues 157 to 180 (AWYILSSSIGSFFAPCLIMILVYL) traverse the membrane as a helical segment. The Cytoplasmic segment spans residues 181–352 (RIYVIAKRSN…LTREKRFTFV (172 aa)). The segment at 193-309 (GPRAKGASRE…ASACNPPLQQ (117 aa)) is disordered. Positions 239 to 249 (PTGEKEGKTPE) are enriched in basic and acidic residues. The span at 279–291 (PEEEAEEEEEECE) shows a compositional bias: acidic residues. Residues 292–302 (PQAAPASSASA) are compositionally biased toward low complexity. The helical transmembrane segment at 353–376 (LAVVIGVFVLCWFPFFFSYSLGAI) threads the bilayer. At 377-385 (CPQRCKVPH) the chain is on the extracellular side. The chain crosses the membrane as a helical span at residues 386–388 (GLF).

Belongs to the G-protein coupled receptor 1 family. Adrenergic receptor subfamily. ADRA2B sub-subfamily. As to quaternary structure, interacts with RAB26. Interacts with PPP1R9B.

It is found in the cell membrane. Alpha-2 adrenergic receptors mediate the catecholamine-induced inhibition of adenylate cyclase through the action of G proteins. In Orycteropus afer (Aardvark), this protein is Alpha-2B adrenergic receptor (ADRA2B).